Consider the following 37-residue polypeptide: Large ribosomal subunit protein bL36 (37 aa).

It belongs to the bacterial ribosomal protein bL36 family.

The polypeptide is Large ribosomal subunit protein bL36 (Photobacterium profundum (strain SS9)).